The chain runs to 43 residues: Protein PsbN (43 aa).

A helical membrane pass occupies residues 5-27 (TLVAIFISCLLVSFTGYAPYTAS).

The protein belongs to the PsbN family.

It is found in the plastid. It localises to the chloroplast thylakoid membrane. Its function is as follows. May play a role in photosystem I and II biogenesis. In Anthoceros angustus (Hornwort), this protein is Protein PsbN.